Consider the following 694-residue polypeptide: Elongation factor G 1 (694 aa).

Residues 5 to 280 enclose the tr-type G domain; the sequence is SRYRNIGIFA…AVVDYLPDPT (276 aa). Residues 14-21, 78-82, and 132-135 each bind GTP; these read AHVDAGKT, DTPGH, and NKLD.

This sequence belongs to the TRAFAC class translation factor GTPase superfamily. Classic translation factor GTPase family. EF-G/EF-2 subfamily.

It localises to the cytoplasm. Its function is as follows. Catalyzes the GTP-dependent ribosomal translocation step during translation elongation. During this step, the ribosome changes from the pre-translocational (PRE) to the post-translocational (POST) state as the newly formed A-site-bound peptidyl-tRNA and P-site-bound deacylated tRNA move to the P and E sites, respectively. Catalyzes the coordinated movement of the two tRNA molecules, the mRNA and conformational changes in the ribosome. The polypeptide is Elongation factor G 1 (Methylococcus capsulatus (strain ATCC 33009 / NCIMB 11132 / Bath)).